An 81-amino-acid polypeptide reads, in one-letter code: Photosystem I iron-sulfur center (81 aa).

2 consecutive 4Fe-4S ferredoxin-type domains span residues S2–W31 and G37–Y68. 8 residues coordinate [4Fe-4S] cluster: C11, C14, C17, C21, C48, C51, C54, and C58.

The eukaryotic PSI reaction center is composed of at least 11 subunits. [4Fe-4S] cluster is required as a cofactor.

The protein localises to the plastid. It is found in the chloroplast thylakoid membrane. The enzyme catalyses reduced [plastocyanin] + hnu + oxidized [2Fe-2S]-[ferredoxin] = oxidized [plastocyanin] + reduced [2Fe-2S]-[ferredoxin]. Functionally, apoprotein for the two 4Fe-4S centers FA and FB of photosystem I (PSI); essential for photochemical activity. FB is the terminal electron acceptor of PSI, donating electrons to ferredoxin. The C-terminus interacts with PsaA/B/D and helps assemble the protein into the PSI complex. Required for binding of PsaD and PsaE to PSI. PSI is a plastocyanin/cytochrome c6-ferredoxin oxidoreductase, converting photonic excitation into a charge separation, which transfers an electron from the donor P700 chlorophyll pair to the spectroscopically characterized acceptors A0, A1, FX, FA and FB in turn. The sequence is that of Photosystem I iron-sulfur center from Phaeodactylum tricornutum (strain CCAP 1055/1).